A 518-amino-acid polypeptide reads, in one-letter code: Xylose import ATP-binding protein XylG (518 aa).

ABC transporter domains follow at residues Leu-6–Glu-245 and Phe-262–Pro-507. Position 38–45 (Gly-38–Ser-45) interacts with ATP.

It belongs to the ABC transporter superfamily. Xylose importer (TC 3.A.1.2.4) family. As to quaternary structure, the complex is composed of two ATP-binding proteins (XylG), two transmembrane proteins (XylH) and a solute-binding protein (XylF).

The protein resides in the cell inner membrane. The enzyme catalyses D-xylose(out) + ATP + H2O = D-xylose(in) + ADP + phosphate + H(+). Part of the ABC transporter complex XylFGH involved in xylose import. Responsible for energy coupling to the transport system. This Pseudomonas savastanoi pv. phaseolicola (strain 1448A / Race 6) (Pseudomonas syringae pv. phaseolicola (strain 1448A / Race 6)) protein is Xylose import ATP-binding protein XylG.